Here is a 621-residue protein sequence, read N- to C-terminus: DDB1- and CUL4-associated factor 10 homolog (621 aa).

WD repeat units lie at residues 46-85, 89-127, 131-170, and 176-215; these read GRTGAIFNLEFNADGNVVVAATERKCVLVFDAITQKEIFK, AHTDSVNCIKFFDERLFATGSDDFTVALWDLRNMKQKLR, GHSNWVKNIEYSSKDKLLVSSGFDGSIFTWDINSQTEQGL, and FHASGLMRCRISPTGDKLVLCTSGGYIMIIHHLDLTTLHK. Disordered stretches follow at residues 305–349 and 437–483; these read VRSE…PRQA and LMGS…TTVR. Phosphoserine is present on serine 307. The span at 324–342 shows a compositional bias: polar residues; the sequence is STTLASRSSLNESQDQDTV. Residues 454–478 show a composition bias toward low complexity; sequence ESNQSSSSSSSSSSSSSSSSSSNNS. 2 positions are modified to phosphoserine: serine 494 and serine 497. The WD 5 repeat unit spans residues 588–621; it reads EHQDVVLCAKFSPREPLLVTGCNGGEVTWYRPNL.

Belongs to the WD repeat DCAF10 family.

This Drosophila melanogaster (Fruit fly) protein is DDB1- and CUL4-associated factor 10 homolog.